Here is a 560-residue protein sequence, read N- to C-terminus: ATP synthase subunit beta, mitochondrial (560 aa).

The transit peptide at 1–54 (MASRRLLASLLRQSAQRGGGLISRSLGNSIPKSASRASSRASPKGFLLNRAVQY) directs the protein to the mitochondrion. Disordered stretches follow at residues 20–44 (GLIS…ASPK) and 58–81 (AAAP…KITD). Composition is skewed to low complexity over residues 33-42 (SASRASSRAS) and 58-71 (AAAP…PPKS). Position 235-242 (235-242 (GGAGVGKT)) interacts with ATP.

The protein belongs to the ATPase alpha/beta chains family. As to quaternary structure, F-type ATPases have 2 components, CF(1) - the catalytic core - and CF(0) - the membrane proton channel. CF(1) has five subunits: alpha(3), beta(3), gamma(1), delta(1), epsilon(1). CF(0) has three main subunits: a, b and c.

Its subcellular location is the mitochondrion. The protein localises to the mitochondrion inner membrane. It carries out the reaction ATP + H2O + 4 H(+)(in) = ADP + phosphate + 5 H(+)(out). In terms of biological role, mitochondrial membrane ATP synthase (F(1)F(0) ATP synthase or Complex V) produces ATP from ADP in the presence of a proton gradient across the membrane which is generated by electron transport complexes of the respiratory chain. F-type ATPases consist of two structural domains, F(1) - containing the extramembraneous catalytic core, and F(0) - containing the membrane proton channel, linked together by a central stalk and a peripheral stalk. During catalysis, ATP synthesis in the catalytic domain of F(1) is coupled via a rotary mechanism of the central stalk subunits to proton translocation. Subunits alpha and beta form the catalytic core in F(1). Rotation of the central stalk against the surrounding alpha(3)beta(3) subunits leads to hydrolysis of ATP in three separate catalytic sites on the beta subunits. The polypeptide is ATP synthase subunit beta, mitochondrial (ATPB) (Nicotiana plumbaginifolia (Leadwort-leaved tobacco)).